Here is a 287-residue protein sequence, read N- to C-terminus: Formamidopyrimidine-DNA glycosylase (287 aa).

Pro2 (schiff-base intermediate with DNA) is an active-site residue. Residue Glu3 is the Proton donor of the active site. Lys58 (proton donor; for beta-elimination activity) is an active-site residue. Positions 104, 123, and 166 each coordinate DNA. An FPG-type zinc finger spans residues 251–287 (RVYDREGEPCPTPACKGVIAREVQAGRSTFFCPVCQV). The active-site Proton donor; for delta-elimination activity is Arg277.

It belongs to the FPG family. As to quaternary structure, monomer. The cofactor is Zn(2+).

It catalyses the reaction Hydrolysis of DNA containing ring-opened 7-methylguanine residues, releasing 2,6-diamino-4-hydroxy-5-(N-methyl)formamidopyrimidine.. It carries out the reaction 2'-deoxyribonucleotide-(2'-deoxyribose 5'-phosphate)-2'-deoxyribonucleotide-DNA = a 3'-end 2'-deoxyribonucleotide-(2,3-dehydro-2,3-deoxyribose 5'-phosphate)-DNA + a 5'-end 5'-phospho-2'-deoxyribonucleoside-DNA + H(+). Its function is as follows. Involved in base excision repair of DNA damaged by oxidation or by mutagenic agents. Acts as a DNA glycosylase that recognizes and removes damaged bases. Has a preference for oxidized purines, such as 7,8-dihydro-8-oxoguanine (8-oxoG). Has AP (apurinic/apyrimidinic) lyase activity and introduces nicks in the DNA strand. Cleaves the DNA backbone by beta-delta elimination to generate a single-strand break at the site of the removed base with both 3'- and 5'-phosphates. The polypeptide is Formamidopyrimidine-DNA glycosylase (Caulobacter vibrioides (strain ATCC 19089 / CIP 103742 / CB 15) (Caulobacter crescentus)).